Reading from the N-terminus, the 542-residue chain is Protein MGF 505-11L (542 aa).

This sequence belongs to the asfivirus MGF 505 family.

Plays a role in virus cell tropism, and may be required for efficient virus replication in macrophages. In African swine fever virus (isolate Tick/Malawi/Lil 20-1/1983) (ASFV), this protein is Protein MGF 505-11L.